A 461-amino-acid polypeptide reads, in one-letter code: Methanol--corrinoid protein co-methyltransferase (461 aa).

The Zn(2+) site is built by E164, C220, and C269.

It belongs to the MtaB family. As to quaternary structure, heterotetramer, composed of 2 MtaB and 2 MtaC subunits.

The enzyme catalyses Co(I)-[methanol-specific corrinoid protein] + methanol + H(+) = methyl-Co(III)-[methanol-specific corrinoid protein] + H2O. Functionally, methyltransferase involved in methanogenesis in the methanol pathway. Catalyzes the methylation of the MtaC-bound cob(I)amide. The protein is Methanol--corrinoid protein co-methyltransferase (mtaB) of Methanosarcina barkeri (strain Fusaro / DSM 804).